Reading from the N-terminus, the 297-residue chain is Syntaxin-4 (297 aa).

The span at 1–12 (MRDRTHELRQGD) shows a compositional bias: basic and acidic residues. Positions 1–21 (MRDRTHELRQGDDSSDDEDKE) are disordered. Topologically, residues 1–275 (MRDRTHELRQ…QKKARKKKVF (275 aa)) are cytoplasmic. Phosphoserine occurs at positions 14 and 15. A Phosphothreonine modification is found at Thr-31. Residues Ser-36, Ser-117, Ser-208, and Ser-248 each carry the phosphoserine modification. Residues 43–163 (QKVRTIRQTI…ERIRRQLKIT (121 aa)) adopt a coiled-coil conformation. A t-SNARE coiled-coil homology domain is found at 200–262 (LNEISARHSE…ERGQEHVKVA (63 aa)). Residues 276-296 (IAICLSITVLILVVIIVISTL) traverse the membrane as a helical; Anchor for type IV membrane protein segment. Residue Val-297 is a topological domain, extracellular.

The protein belongs to the syntaxin family. As to quaternary structure, component of the SNARE complex composed of STX4, SNAP23 and VAMP7 that interacts with SYT7 during lysosomal exocytosis. Found in a complex with VAMP8 and SNAP23. Detected in a complex with SNAP23 and STXBP4. Interacts with VAMP2. Interacts with SNAP23 and SNAPIN. Interacts with LLGL1. Interacts (via C-terminus) with CENPF. Interacts with DOC2B. Interacts with STXBP6. Interacts with STXBP3; excludes interaction with DOC2B and SNAP25. Interacts with STXBP4; excludes interaction with VAMP2. Interacts with STXBP5L.

It localises to the cell membrane. The protein resides in the cell projection. It is found in the neuron projection. The protein localises to the stereocilium. Its function is as follows. Plasma membrane t-SNARE that mediates docking of transport vesicles. Necessary for the translocation of SLC2A4 from intracellular vesicles to the plasma membrane. In neurons, recruited at neurite tips to membrane domains rich in the phospholipid 1-oleoyl-2-palmitoyl-PC (OPPC) which promotes neurite tip surface expression of the dopamine transporter SLC6A3/DAT by facilitating fusion of SLC6A3-containing transport vesicles with the plasma membrane. Together with STXB3 and VAMP2, may also play a role in docking/fusion of intracellular GLUT4-containing vesicles with the cell surface in adipocytes and in docking of synaptic vesicles at presynaptic active zones. Required for normal hearing. The polypeptide is Syntaxin-4 (STX4) (Bos taurus (Bovine)).